We begin with the raw amino-acid sequence, 180 residues long: Adenine phosphoribosyltransferase (180 aa).

Residue S2 is modified to N-acetylserine. Phosphoserine is present on residues S4, S15, and S30. Residue Y60 is modified to Phosphotyrosine. S66 is modified (phosphoserine). The residue at position 114 (K114) is an N6-acetyllysine. T135 carries the post-translational modification Phosphothreonine.

Belongs to the purine/pyrimidine phosphoribosyltransferase family. As to quaternary structure, homodimer.

It is found in the cytoplasm. The catalysed reaction is AMP + diphosphate = 5-phospho-alpha-D-ribose 1-diphosphate + adenine. It functions in the pathway purine metabolism; AMP biosynthesis via salvage pathway; AMP from adenine: step 1/1. Its function is as follows. Catalyzes a salvage reaction resulting in the formation of AMP, that is energically less costly than de novo synthesis. The polypeptide is Adenine phosphoribosyltransferase (Mus pahari (Gairdner's shrew-mouse)).